A 389-amino-acid chain; its full sequence is Major outer membrane porin (389 aa).

This sequence belongs to the chlamydial porin (CP) (TC 1.B.2) family. As to quaternary structure, part of a disulfide cross-linked outer membrane complex (COMC) composed of the major outer membrane porin (MOMP), the small cysteine-rich protein (OmcA) and the large cysteine-rich periplasmic protein (OmcB).

It localises to the cell outer membrane. Functionally, in elementary bodies (EBs, the infectious stage, which is able to survive outside the host cell) provides the structural integrity of the outer envelope through disulfide cross-links with the small cysteine-rich protein and the large cysteine-rich periplasmic protein. It has been described in publications as the Sarkosyl-insoluble COMC (Chlamydia outer membrane complex), and serves as the functional equivalent of peptidoglycan. Its function is as follows. Permits diffusion of specific solutes through the outer membrane. The polypeptide is Major outer membrane porin (ompA) (Chlamydia pneumoniae (Chlamydophila pneumoniae)).